The primary structure comprises 845 residues: ABC transporter A family member 9 (845 aa).

Transmembrane regions (helical) follow at residues 33–53, 192–212, 235–255, 292–312, 318–338, 347–367, and 417–437; these read CVQISIPLILVIILVIVNFWV, AFVAFSMNTMTTTILNYFLGG, IASLLGGSFYPFALSFIMPLF, IYFIIIVFVVGVSSIFGFAVF, FAMFLFLFAWGNSMITFSFFL, AASIFGYFLVIIAVNLNSILS, and SKIIFWLYIDAIVYLLIALYL. The 232-residue stretch at 531–762 folds into the ABC transporter domain; it reads VIIEGLTKHY…FGDGYSVRIN (232 aa). Position 565–572 (565–572) interacts with ATP; it reads GANGAGKT.

This sequence belongs to the ABC transporter superfamily. ABCA family.

It localises to the membrane. The chain is ABC transporter A family member 9 (abcA9) from Dictyostelium discoideum (Social amoeba).